An 859-amino-acid chain; its full sequence is DNA mismatch repair protein MutS (859 aa).

617-624 (GPNMGGKS) contributes to the ATP binding site. The tract at residues 799–821 (ETTSLPHEQPRAKPGKPAVPQQS) is disordered.

Belongs to the DNA mismatch repair MutS family.

In terms of biological role, this protein is involved in the repair of mismatches in DNA. It is possible that it carries out the mismatch recognition step. This protein has a weak ATPase activity. The sequence is that of DNA mismatch repair protein MutS from Pseudomonas savastanoi pv. phaseolicola (strain 1448A / Race 6) (Pseudomonas syringae pv. phaseolicola (strain 1448A / Race 6)).